The primary structure comprises 184 residues: Photosystem I assembly protein Ycf4 (184 aa).

The next 2 helical transmembrane spans lie at 22–42 and 57–77; these read VCWA…GTSS and IIFF…LFIS.

This sequence belongs to the Ycf4 family.

It localises to the plastid. The protein localises to the chloroplast thylakoid membrane. Seems to be required for the assembly of the photosystem I complex. This chain is Photosystem I assembly protein Ycf4, found in Morus indica (Mulberry).